The primary structure comprises 73 residues: Alternative prion protein (73 aa).

The chain crosses the membrane as a helical span at residues 32-52; that stretch reads WWWLGAASWWWLGAAPWWWLG.

In terms of tissue distribution, detected in brain homogenate, primary neurons, and peripheral blood mononuclear cells (at protein level).

It localises to the mitochondrion outer membrane. In Homo sapiens (Human), this protein is Alternative prion protein (PRNP).